The chain runs to 954 residues: Zinc finger protein 618 (954 aa).

M1 carries the post-translational modification N-acetylmethionine. A compositionally biased stretch (low complexity) spans 1-19 (MNQPGGAAAPQADGASAAG). The tract at residues 1 to 56 (MNQPGGAAAPQADGASAAGRKSTASRERLKRSQKSTKVEGPEPVPAEASLSAEQGT) is disordered. Residues K63 and K81 each participate in a glycyl lysine isopeptide (Lys-Gly) (interchain with G-Cter in SUMO2) cross-link. C2H2-type zinc fingers lie at residues 147 to 169 (YECG…VRAH) and 188 to 210 (YTCD…RDLH). A Glycyl lysine isopeptide (Lys-Gly) (interchain with G-Cter in SUMO2) cross-link involves residue K239. The segment at 256–278 (YTCEFCGKQYKYYTPYQEHVALH) adopts a C2H2-type 3 zinc-finger fold. Disordered stretches follow at residues 282–307 (STAP…VSPS) and 337–390 (RTPP…NSSE). The segment covering 340–357 (PATQTQTFRTPNSGSPAS) has biased composition (polar residues). Residues 366 to 380 (FSRRVEGKAQNHFEE) show a composition bias toward basic and acidic residues. The C2H2-type 4 zinc-finger motif lies at 392-414 (YTCGACGIQFQFYNNLLEHMQSH). The interval 421-463 (NIASNQSRSPPAVVEEKWKPQAQRNSANNTTTSGLTPNSMIPE) is disordered. A Glycyl lysine isopeptide (Lys-Gly) (interchain with G-Cter in SUMO2) cross-link involves residue K437. Polar residues predominate over residues 442–459 (AQRNSANNTTTSGLTPNS).

This sequence belongs to the krueppel C2H2-type zinc-finger protein family. Interacts with UHRF2.

Its subcellular location is the nucleus. The protein resides in the chromosome. Regulates UHRF2 function as a specific 5-hydroxymethylcytosine (5hmC) reader by regulating its chromatin localization. This is Zinc finger protein 618 (ZNF618) from Homo sapiens (Human).